The sequence spans 219 residues: Glutathione S-transferase U19 (219 aa).

The 80-residue stretch at 3 to 82 (NEVILLDFWP…YIDEVWSHKN (80 aa)) folds into the GST N-terminal domain. Glutathione contacts are provided by residues 13 to 14 (SM), 39 to 40 (NK), 53 to 54 (KI), and 66 to 67 (ES). The region spanning 88–208 (DPYLRAQARF…LPDPEKVTEF (121 aa)) is the GST C-terminal domain. The residue at position 198 (Ser-198) is a Phosphoserine.

Belongs to the GST superfamily. Tau family.

It is found in the cytoplasm. The protein localises to the cytosol. The enzyme catalyses RX + glutathione = an S-substituted glutathione + a halide anion + H(+). Functionally, catalyzes the glutathionylation of 12-oxophytodienoate (OPDA). In vitro, possesses glutathione S-transferase activity toward 1-chloro-2,4-dinitrobenzene (CDNB) and benzyl isothiocyanate (BITC), and glutathione peroxidase activity toward cumene hydroperoxide. The protein is Glutathione S-transferase U19 (GSTU19) of Arabidopsis thaliana (Mouse-ear cress).